The chain runs to 1605 residues: GTPase-activating protein pac-1 (1605 aa).

Residues 1–574 are required for localization to adherens junctions; the sequence is MEEHHRRLHV…QRFIALFNSS (574 aa). 3 disordered regions span residues 293–430, 529–556, and 574–593; these read QRHP…ISTS, MRSG…LNAP, and SKTS…RSRT. Positions 323–334 are enriched in basic and acidic residues; sequence SKEDPSEDTGHD. Low complexity-rich tracts occupy residues 353 to 365, 420 to 430, and 530 to 552; these read RNAS…SSRS, TTSSTSSISTS, and RSGG…TSRS. Residues 599-726 form the PH domain; that stretch reads RFALPGTILQ…WISVLQSSSE (128 aa). Composition is skewed to polar residues over residues 728–745 and 846–855; these read GIAT…TTGR and KNSQLQSPTA. Disordered stretches follow at residues 728-752 and 846-942; these read GIAT…NAVS and KNSQ…AGAP. Low complexity predominate over residues 868–879; it reads SSSQTMATTSSS. The segment covering 908–917 has biased composition (basic residues); sequence SGRKWKKSKA. Residues 928–941 are compositionally biased toward low complexity; sequence GSSSGSQQQGAAGA. Residues 948 to 1146 enclose the Rho-GAP domain; the sequence is VRIADCPTGS…TLIHYNLWMF (199 aa). 5 disordered regions span residues 1152 to 1176, 1207 to 1258, 1277 to 1339, 1438 to 1533, and 1554 to 1605; these read TEDA…YGVG, EGKG…AASV, SRQT…RRKR, TSDY…ARRH, and GIRK…DELL. Basic residues predominate over residues 1211–1229; the sequence is QKIKNMLRRNSRRDKSKSK. Polar residues-rich tracts occupy residues 1244–1257 and 1278–1300; these read GWTQ…SAAS and RQTV…RLDQ. The span at 1301–1312 shows a compositional bias: low complexity; that stretch reads SPSLESSLGSLP. The span at 1438–1453 shows a compositional bias: polar residues; sequence TSDYSTTSSAPLSTNP. Residues 1461–1476 are compositionally biased toward low complexity; sequence DQPNSSSDYASSDPSP. Composition is skewed to polar residues over residues 1480-1493 and 1500-1515; these read NPST…SNLA and HATS…MSRS. The span at 1558–1575 shows a compositional bias: basic and acidic residues; that stretch reads SSPDVSRDEVSDDEKNHQ.

In terms of assembly, associated with the catenin-cadherin complex consisting of hmr-1, hmp-1 and hmp-2; this is mediated by interaction with picc-1.

The protein resides in the cytoplasm. The protein localises to the cell junction. Its subcellular location is the adherens junction. In terms of biological role, GTPase-activating protein for members of the Rho subfamily including Rac1, RhoA and cdc42 and other Ras-related subfamilies including let-60. Mediates radial (inner-outer) polarity and gastrulation by excluding par-6 from contacted cell surfaces; acts by inactivating cdc42 at inner cell surfaces which limits active cdc42 to outer cell surfaces devoid of cell-cell contacts, where cdc42 can bind and recruit par-6. Required for blastomere polarization. The polypeptide is GTPase-activating protein pac-1 (pac-1) (Caenorhabditis elegans).